A 187-amino-acid polypeptide reads, in one-letter code: UPF0340 protein SP_0663 (187 aa).

This sequence belongs to the UPF0340 family.

This chain is UPF0340 protein SP_0663, found in Streptococcus pneumoniae serotype 4 (strain ATCC BAA-334 / TIGR4).